Reading from the N-terminus, the 394-residue chain is Elongation factor Tu (394 aa).

The region spanning Lys-10–Glu-204 is the tr-type G domain. Residues Gly-19–Thr-26 form a G1 region. A GTP-binding site is contributed by Gly-19 to Thr-26. Mg(2+) is bound at residue Thr-26. Residues Gly-60 to Asn-64 are G2. Residues Asp-81–Gly-84 are G3. GTP contacts are provided by residues Asp-81 to His-85 and Asn-136 to Asp-139. Residues Asn-136–Asp-139 are G4. Residues Ser-174–Leu-176 form a G5 region.

This sequence belongs to the TRAFAC class translation factor GTPase superfamily. Classic translation factor GTPase family. EF-Tu/EF-1A subfamily. In terms of assembly, monomer.

Its subcellular location is the cytoplasm. The catalysed reaction is GTP + H2O = GDP + phosphate + H(+). Its function is as follows. GTP hydrolase that promotes the GTP-dependent binding of aminoacyl-tRNA to the A-site of ribosomes during protein biosynthesis. The sequence is that of Elongation factor Tu from Shewanella amazonensis (strain ATCC BAA-1098 / SB2B).